The following is a 493-amino-acid chain: MAMKSIMVVGTTSHAGKSLISTAICRILSRRGWRVAPFKGQNMALNAYVTANGGEIGYAQAVQAWAAGVVPWVEMNPILLKPQGDMTSQVIIRGRPVGRVNAADYYEQYFEPGWRAIEESLQHLATEFDLVVCEGAGSPAEINLKHRDLTNMRVAKYLNAPTLLVVDIDRGGAFAHVVGTLELLDPEERQLIKGVVINKFRGQRSLLDPGIKWLEERTGIPVVGVIPYLQEVFPAEDSLDLLERKTHKAHADLQITVVRLPRIANFTDFDPLESEPTVAVKYISPKQDLGHPDAVILPGTKTTIADLILLQKTGMAEAIQNYAASGGTVLGICGGYQILGQMIADPEGIEGQAGRYQGLNLLPIRTVITGQKIARQRQVSSNFPQQGLPVNGFEIHQGRSRVEPQGDSQAFQPLFDDVNLGLVDSCQSVWGSYLHGLFDNGPWRRAWLNRLRQQRGLKSLPTGVANYREQREQMLDNIATEVENHLDLTPFLP.

A GATase cobBQ-type domain is found at 252 to 443 (DLQITVVRLP…LHGLFDNGPW (192 aa)). The active-site Nucleophile is Cys-333. His-435 is an active-site residue.

This sequence belongs to the CobB/CobQ family. CobQ subfamily.

Its pathway is cofactor biosynthesis; adenosylcobalamin biosynthesis. Its function is as follows. Catalyzes amidations at positions B, D, E, and G on adenosylcobyrinic A,C-diamide. NH(2) groups are provided by glutamine, and one molecule of ATP is hydrogenolyzed for each amidation. In Nostoc sp. (strain PCC 7120 / SAG 25.82 / UTEX 2576), this protein is Cobyric acid synthase.